A 788-amino-acid chain; its full sequence is Histidine--tRNA ligase, cytoplasmic (788 aa).

The interval 252 to 286 is disordered; it reads PQACEENEAGSSTENPHASGEKPKGDKKSKKKKTL.

This sequence belongs to the class-II aminoacyl-tRNA synthetase family. In terms of assembly, homodimer.

It carries out the reaction tRNA(His) + L-histidine + ATP = L-histidyl-tRNA(His) + AMP + diphosphate + H(+). This Oryza sativa subsp. japonica (Rice) protein is Histidine--tRNA ligase, cytoplasmic.